A 601-amino-acid polypeptide reads, in one-letter code: NADH-quinone oxidoreductase subunit C/D (601 aa).

An NADH dehydrogenase I subunit C region spans residues 1–191 (MKLTREFPSN…DPFMLDAVKQ (191 aa)). The NADH dehydrogenase I subunit D stretch occupies residues 215–601 (DYMFLNLGPN…IDFVMSDVDR (387 aa)).

This sequence in the N-terminal section; belongs to the complex I 30 kDa subunit family. In the C-terminal section; belongs to the complex I 49 kDa subunit family. As to quaternary structure, NDH-1 is composed of 13 different subunits. Subunits NuoB, CD, E, F, and G constitute the peripheral sector of the complex.

Its subcellular location is the cell inner membrane. It catalyses the reaction a quinone + NADH + 5 H(+)(in) = a quinol + NAD(+) + 4 H(+)(out). In terms of biological role, NDH-1 shuttles electrons from NADH, via FMN and iron-sulfur (Fe-S) centers, to quinones in the respiratory chain. The immediate electron acceptor for the enzyme in this species is believed to be ubiquinone. Couples the redox reaction to proton translocation (for every two electrons transferred, four hydrogen ions are translocated across the cytoplasmic membrane), and thus conserves the redox energy in a proton gradient. This Aeromonas hydrophila subsp. hydrophila (strain ATCC 7966 / DSM 30187 / BCRC 13018 / CCUG 14551 / JCM 1027 / KCTC 2358 / NCIMB 9240 / NCTC 8049) protein is NADH-quinone oxidoreductase subunit C/D.